A 460-amino-acid chain; its full sequence is Squalene synthase (460 aa).

A helical membrane pass occupies residues 425–445 (ISILFVFFIILVCLAVIFYVF).

It belongs to the phytoene/squalene synthase family. As to quaternary structure, interacts with pof14. It depends on Mg(2+) as a cofactor.

It is found in the endoplasmic reticulum membrane. The catalysed reaction is 2 (2E,6E)-farnesyl diphosphate + NADPH + H(+) = squalene + 2 diphosphate + NADP(+). It carries out the reaction 2 (2E,6E)-farnesyl diphosphate + NADH + H(+) = squalene + 2 diphosphate + NAD(+). Its pathway is terpene metabolism; lanosterol biosynthesis; lanosterol from farnesyl diphosphate: step 1/3. It functions in the pathway steroid metabolism; ergosterol biosynthesis. Its function is as follows. Squalene synthase; part of the third module of ergosterol biosynthesis pathway that includes by the late steps of the pathway. Erg9 produces squalene from 2 farnesyl pyrophosphate moieties. The third module or late pathway involves the ergosterol synthesis itself through consecutive reactions that mainly occur in the endoplasmic reticulum (ER) membrane. Firstly, the squalene synthase erg9 catalyzes the condensation of 2 farnesyl pyrophosphate moieties to form squalene, which is the precursor of all steroids. Secondly, squalene is converted into lanosterol by the consecutive action of the squalene epoxidase erg1 and the lanosterol synthase erg7. The lanosterol 14-alpha-demethylase erg11/cyp1 catalyzes C14-demethylation of lanosterol to produce 4,4'-dimethyl cholesta-8,14,24-triene-3-beta-ol. In the next steps, a complex process involving various demethylation, reduction and desaturation reactions catalyzed by the C-14 reductase erg24 and the C-4 demethylation complex erg25-erg26-erg27 leads to the production of zymosterol. Erg28 likely functions in the C-4 demethylation complex reaction by tethering erg26 and Erg27 to the endoplasmic reticulum or to facilitate interaction between these proteins. Then, the sterol 24-C-methyltransferase erg6 catalyzes the methyl transfer from S-adenosyl-methionine to the C-24 of zymosterol to form fecosterol. The C-8 sterol isomerase erg2 catalyzes the reaction which results in unsaturation at C-7 in the B ring of sterols and thus converts fecosterol to episterol. The sterol-C5-desaturases erg31 and erg32 then catalyze the introduction of a C-5 double bond in the B ring to produce 5-dehydroepisterol. The C-22 sterol desaturase erg5 further converts 5-dehydroepisterol into ergosta-5,7,22,24(28)-tetraen-3beta-ol by forming the C-22(23) double bond in the sterol side chain. Finally, ergosta-5,7,22,24(28)-tetraen-3beta-ol is substrate of the C-24(28) sterol reductase erg4 to produce ergosterol. In the genus Schizosaccharomyces, a second route exists between lanosterol and fecosterol, via the methylation of lanosterol to eburicol by erg6, followed by C14-demethylation by erg11/cyp1 and C4-demethylation by the demethylation complex erg25-erg26-erg27. This is Squalene synthase from Schizosaccharomyces pombe (strain 972 / ATCC 24843) (Fission yeast).